Consider the following 449-residue polypeptide: 5'-deoxyadenosine deaminase (449 aa).

Zn(2+) is bound by residues H79 and H81. 2 residues coordinate substrate: E108 and H200. Zn(2+) is bound at residue H227. Residues E230 and D316 each contribute to the substrate site. D316 is a Zn(2+) binding site.

It belongs to the metallo-dependent hydrolases superfamily. MTA/SAH deaminase family. As to quaternary structure, homotetramer. It depends on Zn(2+) as a cofactor.

It carries out the reaction 5'-deoxyadenosine + H2O + H(+) = 5'-deoxyinosine + NH4(+). The catalysed reaction is S-adenosyl-L-homocysteine + H2O + H(+) = S-inosyl-L-homocysteine + NH4(+). The enzyme catalyses S-methyl-5'-thioadenosine + H2O + H(+) = S-methyl-5'-thioinosine + NH4(+). It catalyses the reaction adenosine + H2O + H(+) = inosine + NH4(+). The protein operates within amino-acid biosynthesis; S-adenosyl-L-methionine biosynthesis. In terms of biological role, catalyzes the deamination of three SAM-derived enzymatic products, namely 5'-deoxyadenosine, S-adenosyl-L-homocysteine, and 5'-methylthioadenosine, to produce the inosine analogs. Can also deaminate adenosine. The preferred substrate for this enzyme is 5'-deoxyadenosine, but all these substrates are efficiently deaminated. Likely functions in a S-adenosyl-L-methionine (SAM) recycling pathway from S-adenosyl-L-homocysteine (SAH) produced from SAM-dependent methylation reactions. May also be involved in the recycling of 5'-deoxyadenosine, whereupon the 5'-deoxyribose moiety of 5'-deoxyinosine is further metabolized to deoxyhexoses used for the biosynthesis of aromatic amino acids in methanogens. The sequence is that of 5'-deoxyadenosine deaminase from Methanospirillum hungatei JF-1 (strain ATCC 27890 / DSM 864 / NBRC 100397 / JF-1).